Reading from the N-terminus, the 252-residue chain is UPF0246 protein AM1_4276 (252 aa).

Belongs to the UPF0246 family.

The chain is UPF0246 protein AM1_4276 from Acaryochloris marina (strain MBIC 11017).